A 328-amino-acid chain; its full sequence is MTAPVERRVRVAAIQAEPVWNDLQGGVNKVISLLGDVGKEGANVVGFPEVFIPGYPWSIFTATPLDNAPFMEEYFHNSLAVDSDEMRRIQAAVKENGTFCVLGFSERYQGSLYISQVFINTDGQIVHHRRKTKPTHVERAYWGTGEGDSLKCVVDSPFGRIGGLNCWEHTQPLLRYYEYQQDVDIHVASWPVLWDRPESVGSRWPYFITGDMSSRLSQVMAFEGTCFVLVCTQVMSEENFDKNKVRDVEHIQGTGGGFSAIFGPGGEPIATMPSDKEGILYANVDVNDKLRAKQWLDVVGHYSRPDLLSLRVNTHPSKPVFFAEEPEK.

The CN hydrolase domain maps to 9–286; the sequence is VRVAAIQAEP…EGILYANVDV (278 aa). E49 functions as the Proton acceptor in the catalytic mechanism. The active site involves K131. Catalysis depends on C166, which acts as the Nucleophile.

It belongs to the carbon-nitrogen hydrolase superfamily. Nitrilase family.

It carries out the reaction a nitrile + 2 H2O = a carboxylate + NH4(+). Functionally, nitrilase that hydrolyzes preferentially 4-cyanopyridine. Is also able to hydrolyze some aliphatic nitriles, such as (R,S)-mandelonitrile. The protein is Nitrilase of Penicillium rubens (strain ATCC 28089 / DSM 1075 / NRRL 1951 / Wisconsin 54-1255) (Penicillium chrysogenum).